Here is a 234-residue protein sequence, read N- to C-terminus: Large ribosomal subunit protein uL1 (234 aa).

This sequence belongs to the universal ribosomal protein uL1 family. Part of the 50S ribosomal subunit.

Functionally, binds directly to 23S rRNA. The L1 stalk is quite mobile in the ribosome, and is involved in E site tRNA release. In terms of biological role, protein L1 is also a translational repressor protein, it controls the translation of the L11 operon by binding to its mRNA. This chain is Large ribosomal subunit protein uL1, found in Prochlorococcus marinus (strain MIT 9211).